The following is a 1080-amino-acid chain: Origin recognition complex subunit 3 (1080 aa).

3 disordered regions span residues 92–112 (YGIS…DDSS), 566–701 (TIKL…PKRI), and 869–902 (IKNE…ENEQ). Positions 651-661 (IKSDLECNDND) are enriched in basic and acidic residues. The segment covering 662–671 (KDNDDNDNDI) has biased composition (acidic residues). Low complexity-rich tracts occupy residues 672 to 688 (NENN…NSNN) and 875 to 896 (QQQQ…QQQQ).

It belongs to the ORC3 family. As to quaternary structure, ORC is composed of six subunits.

Its subcellular location is the nucleus. In terms of biological role, component of the origin recognition complex (ORC) that binds origins of replication. DNA-binding is ATP-dependent, however specific DNA sequences that define origins of replication have not been identified so far. ORC is required to assemble the pre-replication complex necessary to initiate DNA replication. In Dictyostelium discoideum (Social amoeba), this protein is Origin recognition complex subunit 3 (orcC).